The sequence spans 99 residues: DNA-directed RNA polymerase subunit omega (99 aa).

Belongs to the RNA polymerase subunit omega family. In terms of assembly, the RNAP catalytic core consists of 2 alpha, 1 beta, 1 beta' and 1 omega subunit. When a sigma factor is associated with the core the holoenzyme is formed, which can initiate transcription.

It catalyses the reaction RNA(n) + a ribonucleoside 5'-triphosphate = RNA(n+1) + diphosphate. Its function is as follows. Promotes RNA polymerase assembly. Latches the N- and C-terminal regions of the beta' subunit thereby facilitating its interaction with the beta and alpha subunits. The protein is DNA-directed RNA polymerase subunit omega of Thermus thermophilus (strain ATCC BAA-163 / DSM 7039 / HB27).